Consider the following 424-residue polypeptide: Glucan endo-1,3-alpha-glucosidase agn1 (424 aa).

Positions 1-20 are cleaved as a signal peptide; that stretch reads MKLVLFLVLLFSALINLTNA.

This sequence belongs to the glycosyl hydrolase 71 family. Monomer. In terms of processing, not glycosylated.

It localises to the secreted. The protein resides in the cell wall. It catalyses the reaction Endohydrolysis of (1-&gt;3)-alpha-D-glucosidic linkages in isolichenin, pseudonigeran and nigeran.. Functionally, has a role in cell separation where it is required for the degradation of the cell wall material surrounding the septum (the septum edging) which must be hydrolyzed before full separation of the daughter cells can occur. Hydrolyzes 1,3-alpha-glucan predominantly into pentasaccharides. In Schizosaccharomyces pombe (strain 972 / ATCC 24843) (Fission yeast), this protein is Glucan endo-1,3-alpha-glucosidase agn1 (agn1).